Consider the following 488-residue polypeptide: Cysteine--tRNA ligase (488 aa).

Zn(2+) is bound at residue Cys-28. The 'HIGH' region signature appears at 30-40 (PTVYDDAHLGH). 3 residues coordinate Zn(2+): Cys-209, His-239, and Glu-243. A 'KMSKS' region motif is present at residues 271-275 (KMSKS). Lys-274 is an ATP binding site.

The protein belongs to the class-I aminoacyl-tRNA synthetase family. Monomer. The cofactor is Zn(2+).

The protein resides in the cytoplasm. It carries out the reaction tRNA(Cys) + L-cysteine + ATP = L-cysteinyl-tRNA(Cys) + AMP + diphosphate. In Helicobacter hepaticus (strain ATCC 51449 / 3B1), this protein is Cysteine--tRNA ligase.